A 1722-amino-acid chain; its full sequence is Leucine-rich repeat- and IQ domain-containing protein 1 (1722 aa).

4 disordered regions span residues 23–47, 182–202, 265–285, and 319–367; these read SLEK…TDSV, EDKE…QFQE, RTRF…QQNN, and QEWK…YEEK. Over residues 38-47 the composition is skewed to acidic residues; the sequence is QSDDSDTDSV. Residues 265-278 are compositionally biased toward basic and acidic residues; it reads RTRFKDQQEKEKNS. The IQ 1 domain maps to 283-312; sequence QNNAAVKIQAKYKAFVAYQKYGPIIKEQIE. LRR repeat units follow at residues 819–840, 841–861, 862–883, 884–905, 970–991, 992–1013, 1014–1035, 1036–1057, 1060–1081, and 1082–1103; these read NLQF…SNCK, KLKY…ENLE, NLCV…DGCT, NIQC…FFLE, NLQQ…CDTP, TIVY…ENCG, LLQI…ENLV, LLRE…SSYW, LLQN…FHFV, and SLEK…IKWF. Residues 1117–1157 form the LRRCT domain; it reads NPLLQETNWRDSLLKVLPALRILNGNILNSNSESRTEEHNQ. IQ domains lie at 1335 to 1364 and 1395 to 1424; these read KIMA…LHTA and REKA…AIKN. Polar residues predominate over residues 1506–1524; it reads SEHTQFNSRSENKTSSWTP. Positions 1506 to 1534 are disordered; the sequence is SEHTQFNSRSENKTSSWTPESKTSRKSLL.

The chain is Leucine-rich repeat- and IQ domain-containing protein 1 (LRRIQ1) from Homo sapiens (Human).